The chain runs to 250 residues: 3-deoxy-manno-octulosonate cytidylyltransferase (250 aa).

Belongs to the KdsB family.

It is found in the cytoplasm. The enzyme catalyses 3-deoxy-alpha-D-manno-oct-2-ulosonate + CTP = CMP-3-deoxy-beta-D-manno-octulosonate + diphosphate. The protein operates within nucleotide-sugar biosynthesis; CMP-3-deoxy-D-manno-octulosonate biosynthesis; CMP-3-deoxy-D-manno-octulosonate from 3-deoxy-D-manno-octulosonate and CTP: step 1/1. It participates in bacterial outer membrane biogenesis; lipopolysaccharide biosynthesis. Functionally, activates KDO (a required 8-carbon sugar) for incorporation into bacterial lipopolysaccharide in Gram-negative bacteria. In Legionella pneumophila subsp. pneumophila (strain Philadelphia 1 / ATCC 33152 / DSM 7513), this protein is 3-deoxy-manno-octulosonate cytidylyltransferase.